A 194-amino-acid polypeptide reads, in one-letter code: UPF0301 protein FTA_1286 (194 aa).

Belongs to the UPF0301 (AlgH) family.

This chain is UPF0301 protein FTA_1286, found in Francisella tularensis subsp. holarctica (strain FTNF002-00 / FTA).